Consider the following 968-residue polypeptide: Angiomotin-like protein 1 (968 aa).

2 stretches are compositionally biased toward polar residues: residues 152-164 (VYQS…QGQE) and 177-187 (RSTQPQQNNEE). The interval 152–258 (VYQSARQEPQ…NRANSGQAHK (107 aa)) is disordered. The segment covering 203–224 (GQQQQQQQQQQQQQQQQQQGQG) has biased composition (low complexity). Phosphoserine occurs at positions 253, 281, and 307. Positions 271–291 (RSLSERIMQLSLERNGAKQHL) form a coiled coil. The tract at residues 285-343 (NGAKQHLPSSGNGKSFKAGGEPSPAQPVCKALDPRGPPPEYPFKTKPMKSPVSKNQDHG) is disordered. Coiled-coil stretches lie at residues 449–645 (VERA…RRLR) and 676–705 (ALME…YLEE). Residues 721 to 742 (AERDTTISNHSRNGSYGESSLE) form a disordered region. The span at 726–738 (TISNHSRNGSYGE) shows a compositional bias: polar residues. Phosphoserine is present on S731. A coiled-coil region spans residues 748-773 (EEEEVVQANRRCQDMEYTIKNLHAKI). Residues 785-834 (QRSRKDAGKTDSASLRPARSVPSIAAATGTHSRQTSLTSSQLTEEKKEEK) form a disordered region. Phosphoserine occurs at positions 804, 816, and 840. Low complexity predominate over residues 853 to 878 (ASAPLLPTTPASALSLPASTTSASST). The tract at residues 853–956 (ASAPLLPTTP…GRVSNLLHKP (104 aa)) is disordered. Phosphoserine is present on residues S912 and S918. Residues 965 to 968 (EVLI) carry the PDZ-binding motif.

This sequence belongs to the angiomotin family. Polyubiquitinated by NEDD4, leading to proteasomal degradation. Expressed in exocrine glands, including pancreas, submandibular gland, lacrimal gland, parotid gland and sublingual gland (at protein level).

It is found in the cell junction. It localises to the tight junction. Functionally, inhibits the Wnt/beta-catenin signaling pathway, probably by recruiting CTNNB1 to recycling endosomes and hence preventing its translocation to the nucleus. The sequence is that of Angiomotin-like protein 1 (Amotl1) from Mus musculus (Mouse).